The chain runs to 145 residues: Flagellar assembly factor FliW (145 aa).

Belongs to the FliW family. In terms of assembly, interacts with translational regulator CsrA and flagellin(s).

The protein resides in the cytoplasm. Functionally, acts as an anti-CsrA protein, binds CsrA and prevents it from repressing translation of its target genes, one of which is flagellin. Binds to flagellin and participates in the assembly of the flagellum. The sequence is that of Flagellar assembly factor FliW from Exiguobacterium sp. (strain ATCC BAA-1283 / AT1b).